A 294-amino-acid polypeptide reads, in one-letter code: Elongation factor Ts (294 aa).

Residues 79–82 form an involved in Mg(2+) ion dislocation from EF-Tu region; that stretch reads TDFV.

This sequence belongs to the EF-Ts family.

It localises to the cytoplasm. In terms of biological role, associates with the EF-Tu.GDP complex and induces the exchange of GDP to GTP. It remains bound to the aminoacyl-tRNA.EF-Tu.GTP complex up to the GTP hydrolysis stage on the ribosome. The protein is Elongation factor Ts (tsf) of Geobacillus kaustophilus (strain HTA426).